The following is a 358-amino-acid chain: UDP-N-acetylglucosamine--N-acetylmuramyl-(pentapeptide) pyrophosphoryl-undecaprenol N-acetylglucosamine transferase (358 aa).

UDP-N-acetyl-alpha-D-glucosamine is bound by residues 13 to 15, asparagine 125, arginine 161, serine 189, isoleucine 244, and glutamine 288; that span reads TGG.

It belongs to the glycosyltransferase 28 family. MurG subfamily.

The protein localises to the cell membrane. The catalysed reaction is di-trans,octa-cis-undecaprenyl diphospho-N-acetyl-alpha-D-muramoyl-L-alanyl-D-glutamyl-meso-2,6-diaminopimeloyl-D-alanyl-D-alanine + UDP-N-acetyl-alpha-D-glucosamine = di-trans,octa-cis-undecaprenyl diphospho-[N-acetyl-alpha-D-glucosaminyl-(1-&gt;4)]-N-acetyl-alpha-D-muramoyl-L-alanyl-D-glutamyl-meso-2,6-diaminopimeloyl-D-alanyl-D-alanine + UDP + H(+). It functions in the pathway cell wall biogenesis; peptidoglycan biosynthesis. Its function is as follows. Cell wall formation. Catalyzes the transfer of a GlcNAc subunit on undecaprenyl-pyrophosphoryl-MurNAc-pentapeptide (lipid intermediate I) to form undecaprenyl-pyrophosphoryl-MurNAc-(pentapeptide)GlcNAc (lipid intermediate II). In Baumannia cicadellinicola subsp. Homalodisca coagulata, this protein is UDP-N-acetylglucosamine--N-acetylmuramyl-(pentapeptide) pyrophosphoryl-undecaprenol N-acetylglucosamine transferase.